The following is a 357-amino-acid chain: Alanine racemase (357 aa).

The active-site Proton acceptor; specific for D-alanine is the K35. K35 is modified (N6-(pyridoxal phosphate)lysine). R131 serves as a coordination point for substrate. Y256 (proton acceptor; specific for L-alanine) is an active-site residue. M304 is a substrate binding site.

Belongs to the alanine racemase family. Requires pyridoxal 5'-phosphate as cofactor.

The catalysed reaction is L-alanine = D-alanine. Its pathway is amino-acid biosynthesis; D-alanine biosynthesis; D-alanine from L-alanine: step 1/1. Its function is as follows. Catalyzes the interconversion of L-alanine and D-alanine. May also act on other amino acids. The polypeptide is Alanine racemase (alr) (Legionella pneumophila (strain Corby)).